Here is a 532-residue protein sequence, read N- to C-terminus: CTP synthase (532 aa).

The segment at 1–267 (MAKFIFVTGG…QDIIIEQLQL (267 aa)) is amidoligase domain. Residue Ser-13 coordinates CTP. Ser-13 serves as a coordination point for UTP. 14–19 (GLGKGI) contacts ATP. Tyr-54 contributes to the L-glutamine binding site. Asp-71 is an ATP binding site. 2 residues coordinate Mg(2+): Asp-71 and Glu-141. CTP contacts are provided by residues 148–150 (DIE), 188–193 (KTKPIQ), and Lys-224. UTP-binding positions include 188–193 (KTKPIQ) and Lys-224. The Glutamine amidotransferase type-1 domain maps to 292–532 (EISFVGKYIE…FIKAIIENNK (241 aa)). L-glutamine is bound at residue Gly-354. Catalysis depends on Cys-381, which acts as the Nucleophile; for glutamine hydrolysis. L-glutamine-binding positions include 382 to 385 (LGMQ), Glu-405, and Arg-461. Catalysis depends on residues His-506 and Glu-508.

The protein belongs to the CTP synthase family. As to quaternary structure, homotetramer.

It catalyses the reaction UTP + L-glutamine + ATP + H2O = CTP + L-glutamate + ADP + phosphate + 2 H(+). The catalysed reaction is L-glutamine + H2O = L-glutamate + NH4(+). It carries out the reaction UTP + NH4(+) + ATP = CTP + ADP + phosphate + 2 H(+). It functions in the pathway pyrimidine metabolism; CTP biosynthesis via de novo pathway; CTP from UDP: step 2/2. With respect to regulation, allosterically activated by GTP, when glutamine is the substrate; GTP has no effect on the reaction when ammonia is the substrate. The allosteric effector GTP functions by stabilizing the protein conformation that binds the tetrahedral intermediate(s) formed during glutamine hydrolysis. Inhibited by the product CTP, via allosteric rather than competitive inhibition. In terms of biological role, catalyzes the ATP-dependent amination of UTP to CTP with either L-glutamine or ammonia as the source of nitrogen. Regulates intracellular CTP levels through interactions with the four ribonucleotide triphosphates. In Mycoplasma capricolum subsp. capricolum (strain California kid / ATCC 27343 / NCTC 10154), this protein is CTP synthase.